A 337-amino-acid chain; its full sequence is tRNA N6-adenosine threonylcarbamoyltransferase (337 aa).

The Fe cation site is built by histidine 111 and histidine 115. Substrate is bound by residues 134–138 (LVSGG), aspartate 167, glycine 180, and asparagine 272. Aspartate 300 is a binding site for Fe cation.

It belongs to the KAE1 / TsaD family. Requires Fe(2+) as cofactor.

Its subcellular location is the cytoplasm. The enzyme catalyses L-threonylcarbamoyladenylate + adenosine(37) in tRNA = N(6)-L-threonylcarbamoyladenosine(37) in tRNA + AMP + H(+). Required for the formation of a threonylcarbamoyl group on adenosine at position 37 (t(6)A37) in tRNAs that read codons beginning with adenine. Is involved in the transfer of the threonylcarbamoyl moiety of threonylcarbamoyl-AMP (TC-AMP) to the N6 group of A37, together with TsaE and TsaB. TsaD likely plays a direct catalytic role in this reaction. In Salmonella newport (strain SL254), this protein is tRNA N6-adenosine threonylcarbamoyltransferase.